We begin with the raw amino-acid sequence, 241 residues long: Carboxy-S-adenosyl-L-methionine synthase (241 aa).

Residues tyrosine 38, 63 to 65, 88 to 89, 116 to 117, asparagine 131, and arginine 198 contribute to the S-adenosyl-L-methionine site; these read GCS, DN, and DI.

Belongs to the class I-like SAM-binding methyltransferase superfamily. Cx-SAM synthase family. In terms of assembly, homodimer.

It catalyses the reaction prephenate + S-adenosyl-L-methionine = carboxy-S-adenosyl-L-methionine + 3-phenylpyruvate + H2O. Functionally, catalyzes the conversion of S-adenosyl-L-methionine (SAM) to carboxy-S-adenosyl-L-methionine (Cx-SAM). This is Carboxy-S-adenosyl-L-methionine synthase from Actinobacillus pleuropneumoniae serotype 3 (strain JL03).